Consider the following 542-residue polypeptide: Chaperonin GroEL (542 aa).

Residues 29 to 32, 86 to 90, glycine 413, 476 to 478, and aspartate 492 each bind ATP; these read TLGP, DGTTT, and NAA. The interval 521-542 is disordered; sequence QPDENGPAAGPDMGMGGMGGMM. Residues 533–542 show a composition bias toward gly residues; sequence MGMGGMGGMM.

It belongs to the chaperonin (HSP60) family. Forms a cylinder of 14 subunits composed of two heptameric rings stacked back-to-back. Interacts with the co-chaperonin GroES.

It is found in the cytoplasm. It carries out the reaction ATP + H2O + a folded polypeptide = ADP + phosphate + an unfolded polypeptide.. Functionally, together with its co-chaperonin GroES, plays an essential role in assisting protein folding. The GroEL-GroES system forms a nano-cage that allows encapsulation of the non-native substrate proteins and provides a physical environment optimized to promote and accelerate protein folding. This Listeria innocua serovar 6a (strain ATCC BAA-680 / CLIP 11262) protein is Chaperonin GroEL.